The following is a 285-amino-acid chain: Putative pyruvate, phosphate dikinase regulatory protein (285 aa).

ADP is bound at residue 165–172 (GVSRTSKT).

Belongs to the pyruvate, phosphate/water dikinase regulatory protein family. PDRP subfamily.

The catalysed reaction is N(tele)-phospho-L-histidyl/L-threonyl-[pyruvate, phosphate dikinase] + ADP = N(tele)-phospho-L-histidyl/O-phospho-L-threonyl-[pyruvate, phosphate dikinase] + AMP + H(+). It carries out the reaction N(tele)-phospho-L-histidyl/O-phospho-L-threonyl-[pyruvate, phosphate dikinase] + phosphate + H(+) = N(tele)-phospho-L-histidyl/L-threonyl-[pyruvate, phosphate dikinase] + diphosphate. Its function is as follows. Bifunctional serine/threonine kinase and phosphorylase involved in the regulation of the pyruvate, phosphate dikinase (PPDK) by catalyzing its phosphorylation/dephosphorylation. This Lactobacillus delbrueckii subsp. bulgaricus (strain ATCC BAA-365 / Lb-18) protein is Putative pyruvate, phosphate dikinase regulatory protein.